The following is a 204-amino-acid chain: TPR repeat-containing protein RHE_CH03534.1 (204 aa).

An N-terminal signal peptide occupies residues 1 to 29; that stretch reads MSAMRLFALTSAMLPLAFILSTSPFPATA. 3 TPR repeats span residues 84–117, 118–151, and 153–185; these read INLL…KPDY, AESW…EPRH, and GALS…YPAD.

The polypeptide is TPR repeat-containing protein RHE_CH03534.1 (Rhizobium etli (strain ATCC 51251 / DSM 11541 / JCM 21823 / NBRC 15573 / CFN 42)).